Consider the following 1038-residue polypeptide: Type I restriction enzyme EcoR124I/EcoR124II endonuclease subunit (1038 aa).

The tract at residues 31–249 is nuclease domain; that stretch reads QSESDLEREL…LKDFTATCFQ (219 aa). Residues 250–469 form a motor 1 domain region; sequence KHTLLNVLVN…SYVITDAIRD (220 aa). A Helicase ATP-binding domain is found at 294-439; it reads KNWSKPESGG…YQFGFTGTPI (146 aa). An ATP-binding site is contributed by 307–314; that stretch reads HTTGSGKT. The short motif at 408-411 is the DEAH box element; that stretch reads DECH. The segment at 470–702 is motor 2 domain; sequence EKVLKFKVDY…YDATKTFGNI (233 aa). A motor 2-helicase linker region spans residues 720–732; that stretch reads GDKNTKNVVLEKS. The helicase domain stretch occupies residues 732-860; the sequence is SYTEYMEGFT…NDIRDWQRRE (129 aa). Residues 859 to 886 are helicase-CTD linker; that stretch reads REKEAEKKEKSTTDWDDVVFEVDLLKSQ. A C-terminal domain region spans residues 886–1038; that stretch reads QEINLDYILG…EKFKGVGGKI (153 aa).

Belongs to the HsdR family. As to quaternary structure, a monomer in solution. The type I restriction/modification system is composed of three polypeptides R, M and S; the restriction enzyme has stoichiometry R(2)M(2)S(1) while the methyltransferase is M(2)S(1). There is an equilibrium between R(2)M(2)S(1) and R(1)M(2)S(1); the latter is methylation and translocation proficient but restriction deficient. (Microbial infection) Holoenenzyme interacts with Escherichia phage T7 protein Ocr; this interaction leads to the inhibition of the restriction activity, but may still allow methylation and translocation.

It catalyses the reaction Endonucleolytic cleavage of DNA to give random double-stranded fragments with terminal 5'-phosphates, ATP is simultaneously hydrolyzed.. Functionally, the restriction (R) subunit of a type I restriction enzyme that recognizes 5'-GAAN(6)RTCG-3' (for EcoR124I) and 5'-GAAN(7)RTCG-3' (for EcoR124II) and cleaves a random distance away. Subunit R is required for both nuclease and ATPase activities, but not for modification. After locating an unmethylated recognition site, the enzyme complex serves as a molecular motor that translocates DNA in an ATP-dependent manner until a collision occurs that triggers cleavage. The enzyme undergoes major structural changes to bring the motor domains into contact with DNA, allowing DNA translocation. This prevents DNA access to the catalytic domains of both the R and M subunits, preventing both restriction and methylation. The R(1)M(2)S(1) complex translocates an average of 555 bp/second on nicked DNA; the R(2)M(2)S(1) complex translocates at double that speed. The 2 R subunit motors are independent and track along the helical pitch of the DNA, inducing positive supercoiling ahead of themselves. The sequence is that of Type I restriction enzyme EcoR124I/EcoR124II endonuclease subunit from Escherichia coli.